The primary structure comprises 466 residues: Mitochondrial-processing peptidase subunit beta (466 aa).

H73 is a Zn(2+) binding site. E76 acts as the Proton acceptor in catalysis. 2 residues coordinate Zn(2+): H77 and E153.

Belongs to the peptidase M16 family. In terms of assembly, heterodimer of mppA (alpha) and mppB (beta) subunits, forming the mitochondrial processing protease (MPP) in which mppA is involved in substrate recognition and binding and mppB is the catalytic subunit. The cofactor is Zn(2+).

Its subcellular location is the mitochondrion matrix. The enzyme catalyses Release of N-terminal transit peptides from precursor proteins imported into the mitochondrion, typically with Arg in position P2.. Its activity is regulated as follows. Binding to mppA is required for catalytic activity. In terms of biological role, catalytic subunit of the essential mitochondrial processing protease (MPP), which cleaves the mitochondrial sequence off newly imported precursors proteins. Preferentially, cleaves after an arginine at position P2. The chain is Mitochondrial-processing peptidase subunit beta (mppB) from Lentinula edodes (Shiitake mushroom).